The sequence spans 538 residues: Small ribosomal subunit protein uS3m (538 aa).

A disordered region spans residues 111-134; sequence SSEGTEEERNEVRGRGAGKRVESI. Over residues 120–134 the composition is skewed to basic and acidic residues; sequence NEVRGRGAGKRVESI.

Belongs to the universal ribosomal protein uS3 family.

It localises to the mitochondrion. In Oryza sativa subsp. japonica (Rice), this protein is Small ribosomal subunit protein uS3m (RPS3).